The sequence spans 344 residues: Putative 2-hydroxyacid dehydrogenase YoaD (344 aa).

NAD(+) is bound at residue D193. R251 is a catalytic residue. Residue D275 participates in NAD(+) binding. Residue E280 is part of the active site. H300 (proton donor) is an active-site residue.

Belongs to the D-isomer specific 2-hydroxyacid dehydrogenase family.

The protein is Putative 2-hydroxyacid dehydrogenase YoaD (yoaD) of Bacillus subtilis (strain 168).